A 499-amino-acid polypeptide reads, in one-letter code: Potassium voltage-gated channel subfamily A member 2 (499 aa).

A disordered region spans residues 1 to 27; it reads MTVATGEPADEAAALPGHPQDTYDPEA. A tetramerization domain region spans residues 1-125; the sequence is MTVATGEPAD…YELGEEAMEM (125 aa). Residues 1-160 are Cytoplasmic-facing; sequence MTVATGEPAD…LLFEYPESSG (160 aa). A helical membrane pass occupies residues 161–182; the sequence is PARIIAIVSVMVILISIVSFCL. Over 183–221 the chain is Extracellular; the sequence is ETLPIFRDENEDMHGGGVTFHTYSNSTIGYQQSTSFTDP. Residue Asn-207 is glycosylated (N-linked (GlcNAc...) asparagine). Residues 222–243 form a helical membrane-spanning segment; that stretch reads FFIVETLCIIWFSFEFLVRFFA. Cys-244 is lipidated: S-palmitoyl cysteine. Residues 244-254 are Cytoplasmic-facing; the sequence is CPSKAGFFTNI. The chain crosses the membrane as a helical span at residues 255–275; the sequence is MNIIDIVAIIPYFITLGTELA. Residues 276–289 are Extracellular-facing; it reads EKPEDAQQGQQAMS. A helical; Voltage-sensor transmembrane segment spans residues 290-310; the sequence is LAILRVIRLVRVFRIFKLSRH. The Cytoplasmic portion of the chain corresponds to 311–325; it reads SKGLQILGQTLKASM. The interval 312–325 is S4-S5 linker; it reads KGLQILGQTLKASM. Residues 326-347 form a helical membrane-spanning segment; sequence RELGLLIFFLFIGVILFSSAVY. Residues 348–361 lie on the Extracellular side of the membrane; sequence FAEADERESQFPSI. Residues 362-373 constitute an intramembrane region (helical); it reads PDAFWWAVVSMT. Positions 374–379 match the Selectivity filter motif; it reads TVGYGD. An intramembrane segment occupies 374–381; sequence TVGYGDMV. Residues 382-388 lie on the Extracellular side of the membrane; that stretch reads PTTIGGK. Residues 389–417 traverse the membrane as a helical segment; the sequence is IVGSLCAIAGVLTIALPVPVIVSNFNYFY. Topologically, residues 418-499 are cytoplasmic; the sequence is HRETEGEEQA…VNITKMLTDV (82 aa). Phosphotyrosine is present on Tyr-429. Phosphoserine is present on residues Ser-434, Ser-440, Ser-441, and Ser-449. Tyr-458 is modified (phosphotyrosine). Ser-468 bears the Phosphoserine mark. The PDZ-binding motif lies at 497–499; that stretch reads TDV.

This sequence belongs to the potassium channel family. A (Shaker) (TC 1.A.1.2) subfamily. Kv1.2/KCNA2 sub-subfamily. Homotetramer and heterotetramer with other channel-forming alpha subunits, such as KCNA1, KCNA4, KCNA5, KCNA6 and KCNA7. Channel activity is regulated by interaction with the beta subunits, including KCNAB1 and KCNAB2. Identified in a complex with KCNA1 and KCNAB2. Identified in a complex with KCNA5 and KCNAB1. Interacts with the beta subunit KCNAB1. Identified in a complex with KCNA4 and FYN. Interacts with PTK2B. Interacts (via C-terminus) with CTTN. Interacts (via N-terminal cytoplasmic domain) with RHOA (GTP-bound form); this regulates channel activity by reducing location at the cell surface in response to CHRM1 activation. Interacts with DRD2. Interacts with SIGMAR1; cocaine consumption leads to increased interaction. Interacts with ADAM22. Interacts with CNTNAP2. Interacts (via C-terminus) with the PDZ domains of DLG1, DLG2 and DLG4. Interacts with ADAM11. Interacts with LYNX1. In terms of processing, phosphorylated on tyrosine residues; phosphorylation increases in response to ischemia. Phosphorylated on tyrosine residues by activated PTK2B/PYK2. Phosphorylation on tyrosine residues suppresses ion channel activity. Phosphorylated on tyrosine residues in response to CHRM1 activation; this abolishes interaction with CTTN. This is probably due to endocytosis of the phosphorylated channel subunits. Phosphorylated on serine residues in response to increased cAMP levels; phosphorylation is apparently not catalyzed by PKA. Post-translationally, N-glycosylated, with complex, sialylated N-glycans. Expressed in a wide variety of gastrointestinal smooth muscles. Not expressed in portal vein, renal artery, and uterus.

Its subcellular location is the cell membrane. It is found in the membrane. The protein localises to the cell projection. It localises to the axon. The protein resides in the synapse. Its subcellular location is the presynaptic cell membrane. It is found in the synaptosome. The protein localises to the endoplasmic reticulum membrane. It localises to the dendrite. The protein resides in the lamellipodium membrane. Its subcellular location is the cell junction. It is found in the paranodal septate junction. It carries out the reaction K(+)(in) = K(+)(out). Inhibited by 4-aminopyridine (4-AP). Inhibited by dendrotoxin (DTX) and charybdotoxin (CTX), but not by tetraethylammonium (TEA). Inhibited by tityustoxin-K alpha (TsTX-Kalpha), a toxin that is highly specific for KCNA2. Inhibited by maurotoxin. Inhibited by kappaM conotoxins kappaM-RIIIJ and kappaM-RIIIK. Its function is as follows. Voltage-gated potassium channel that mediates transmembrane potassium transport in excitable membranes, primarily in the brain and the central nervous system, but also in the cardiovascular system. Prevents aberrant action potential firing and regulates neuronal output. Forms tetrameric potassium-selective channels through which potassium ions pass in accordance with their electrochemical gradient. The channel alternates between opened and closed conformations in response to the voltage difference across the membrane. Can form functional homotetrameric channels and heterotetrameric channels that contain variable proportions of KCNA1, KCNA2, KCNA4, KCNA5, KCNA6, KCNA7, and possibly other family members as well; channel properties depend on the type of alpha subunits that are part of the channel. Channel properties are modulated by cytoplasmic beta subunits that regulate the subcellular location of the alpha subunits and promote rapid inactivation of delayed rectifier potassium channels. In vivo, membranes probably contain a mixture of heteromeric potassium channel complexes, making it difficult to assign currents observed in intact tissues to any particular potassium channel family member. Homotetrameric KCNA2 forms a delayed-rectifier potassium channel that opens in response to membrane depolarization, followed by slow spontaneous channel closure. In contrast, a heteromultimer formed by KCNA2 and KCNA4 shows rapid inactivation. Regulates neuronal excitability and plays a role as pacemaker in the regulation of neuronal action potentials. KCNA2-containing channels play a presynaptic role and prevent hyperexcitability and aberrant action potential firing. Response to toxins that are selective for KCNA2-containing potassium channels suggests that in Purkinje cells, dendritic subthreshold KCNA2-containing potassium channels prevent random spontaneous calcium spikes, suppressing dendritic hyperexcitability without hindering the generation of somatic action potentials, and thereby play an important role in motor coordination. Plays a role in the induction of long-term potentiation of neuron excitability in the CA3 layer of the hippocampus. May function as down-stream effector for G protein-coupled receptors and inhibit GABAergic inputs to basolateral amygdala neurons. May contribute to the regulation of neurotransmitter release, such as gamma-aminobutyric acid (GABA). Contributes to the regulation of the axonal release of the neurotransmitter dopamine. Reduced KCNA2 expression plays a role in the perception of neuropathic pain after peripheral nerve injury, but not acute pain. Plays a role in the regulation of the time spent in non-rapid eye movement (NREM) sleep. This chain is Potassium voltage-gated channel subfamily A member 2 (KCNA2), found in Canis lupus familiaris (Dog).